The sequence spans 325 residues: Diaminopimelate epimerase (325 aa).

Substrate contacts are provided by N11 and N69. Residue C78 is the Proton donor of the active site. Residues 79-80 (GN), N166, N203, and 221-222 (ER) each bind substrate. The Proton acceptor role is filled by C230. 231-232 (GT) contacts substrate.

The protein belongs to the diaminopimelate epimerase family. As to quaternary structure, homodimer.

The protein resides in the cytoplasm. It catalyses the reaction (2S,6S)-2,6-diaminopimelate = meso-2,6-diaminopimelate. The protein operates within amino-acid biosynthesis; L-lysine biosynthesis via DAP pathway; DL-2,6-diaminopimelate from LL-2,6-diaminopimelate: step 1/1. Its function is as follows. Catalyzes the stereoinversion of LL-2,6-diaminopimelate (L,L-DAP) to meso-diaminopimelate (meso-DAP), a precursor of L-lysine and an essential component of the bacterial peptidoglycan. This chain is Diaminopimelate epimerase, found in Ligilactobacillus salivarius (strain UCC118) (Lactobacillus salivarius).